Here is a 72-residue protein sequence, read N- to C-terminus: uncharacterized protein (72 aa).

This sequence belongs to the asfivirus I73R family.

It localises to the virion. This is an uncharacterized protein from Ornithodoros (relapsing fever ticks).